A 603-amino-acid polypeptide reads, in one-letter code: uncharacterized protein (603 aa).

The PE domain maps to 1–93 (MSFVIAAPET…AGAYASAEAA (93 aa)).

Belongs to the mycobacterial PE family. PGRS subfamily.

This is an uncharacterized protein from Mycobacterium tuberculosis (strain ATCC 25618 / H37Rv).